The primary structure comprises 308 residues: MEKIAPELFLVAGNPDSFVVDDLLDFSNDDGEVDDGLNTLPDSSTLSTGTLTDSSNSSSLFTDGTGFSDLYIPNDDIAELEWLSNFVEESFAGEDQDKLHLFSGLKNPQTTGSTLTHLIKPEPELDHQFIDIDESNVAVPAKARSKRSRSAASTWASRLLSLADSDETNPKKKQRRVKEQDFAGDMDVDCGESGGGRRCLHCATEKTPQWRTGPMGPKTLCNACGVRYKSGRLVPEYRPASSPTFVMARHSNSHRKVMELRRQKEMRDEHLLSQLRCENLLMDIRSNGEDFLMHNNTNHVAPDFRHLI.

The interval 34 to 57 is disordered; the sequence is DDGLNTLPDSSTLSTGTLTDSSNS. Positions 39–57 are enriched in low complexity; that stretch reads TLPDSSTLSTGTLTDSSNS. Residues 142–149 carry the Nuclear localization signal motif; sequence KARSKRSR. The GATA-type zinc finger occupies 193–247; that stretch reads SGGGRRCLHCATEKTPQWRTGPMGPKTLCNACGVRYKSGRLVPEYRPASSPTFVM.

It belongs to the type IV zinc-finger family. Class A subfamily.

The protein resides in the nucleus. Functionally, transcriptional activator that specifically binds 5'-GATA-3' or 5'-GAT-3' motifs within gene promoters. May be involved in the regulation of some light-responsive genes. This Arabidopsis thaliana (Mouse-ear cress) protein is GATA transcription factor 9 (GATA9).